The following is a 906-amino-acid chain: Formin-like protein 18 (906 aa).

The signal sequence occupies residues 1-25 (MSKLRWLIMAFLVCLLLLTPKDLEG). Residues 120-140 (MVVVGLSAACVALVTLVGICF) form a helical membrane-spanning segment. 2 disordered regions span residues 267 to 416 (AGGG…QADP) and 854 to 906 (NAKA…DSDD). The span at 274–292 (AAPPPPAGPPPPAPPPLPP) shows a compositional bias: pro residues. Residues 293–303 (SHHHHHGHHPP) are compositionally biased toward basic residues. Composition is skewed to pro residues over residues 320-339 (APPP…PAPS), 348-375 (GPPP…PPPG), and 383-402 (GPPP…PPFK). Low complexity-rich tracts occupy residues 403–416 (KSPG…QADP) and 854–877 (NAKA…QSSF). An FH2 domain is found at 411–866 (AAQADPNKAK…AKKQQQPTPA (456 aa)). The segment covering 878–889 (RDPRQQIQDRRA) has biased composition (basic and acidic residues). Positions 897-906 (SSSSSSDSDD) are enriched in low complexity.

Belongs to the formin-like family. Class-I subfamily.

It localises to the membrane. The sequence is that of Formin-like protein 18 (FH18) from Oryza sativa subsp. japonica (Rice).